The following is a 945-amino-acid chain: UvrABC system protein A (945 aa).

Residue glycine 31 to serine 38 coordinates ATP. The C4-type zinc-finger motif lies at cysteine 254–cysteine 281. ABC transporter domains lie at tryptophan 310 to leucine 587 and arginine 607 to lysine 937. Residue glycine 640–serine 647 participates in ATP binding. Residues cysteine 740–cysteine 766 form a C4-type zinc finger.

It belongs to the ABC transporter superfamily. UvrA family. Forms a heterotetramer with UvrB during the search for lesions.

Its subcellular location is the cytoplasm. The UvrABC repair system catalyzes the recognition and processing of DNA lesions. UvrA is an ATPase and a DNA-binding protein. A damage recognition complex composed of 2 UvrA and 2 UvrB subunits scans DNA for abnormalities. When the presence of a lesion has been verified by UvrB, the UvrA molecules dissociate. This chain is UvrABC system protein A, found in Pseudomonas aeruginosa (strain ATCC 15692 / DSM 22644 / CIP 104116 / JCM 14847 / LMG 12228 / 1C / PRS 101 / PAO1).